Here is a 398-residue protein sequence, read N- to C-terminus: MSKTIAINAGSSSLKWQLYQMPEEEVLAQGIIERIGLKDSISTVKYDGKKEEQILDIHDHTEAVKILLNDLIHFGIIAAYGEITGVGHRVVAGGELFKESVVVNDKVLEQIEELSVLAPLHNPGAAAGIRAFRDILPDITSVCVFDTSFHTSMAKHTYLYPIPQKYYTDYKVRKYGAHGTSHKYVAQEAAKMLGRPLEELKLITAHIGNGVSITANYHGKSVDTSMGFTPLAGPMMGTRSGDIDPAIIPYLIEQDPELKDAADVVNMLNKKSGLSGVSGISSDMRDIEAGLQEDNPDAVLAYNIFIDRIKKCIGQYFAVLNGADALVFTAGMGENAPLMRQDVIGGLSWFGMDIDPEKNVFGYRGDISTPESKVKVLVISTDEELCIARDVERLKNTK.

Asn8 is a binding site for Mg(2+). Lys15 lines the ATP pocket. A substrate-binding site is contributed by Arg89. The active-site Proton donor/acceptor is Asp146. Residues His206–Gly210, Asp283–Arg285, and Gly331–Asn335 contribute to the ATP site. Glu383 provides a ligand contact to Mg(2+).

Belongs to the acetokinase family. In terms of assembly, homodimer. Mg(2+) serves as cofactor. Requires Mn(2+) as cofactor.

The protein localises to the cytoplasm. The enzyme catalyses acetate + ATP = acetyl phosphate + ADP. It functions in the pathway metabolic intermediate biosynthesis; acetyl-CoA biosynthesis; acetyl-CoA from acetate: step 1/2. Catalyzes the formation of acetyl phosphate from acetate and ATP. Can also catalyze the reverse reaction. The polypeptide is Acetate kinase (Streptococcus pyogenes serotype M49 (strain NZ131)).